Reading from the N-terminus, the 86-residue chain is Protein Vpu (86 aa).

The Extracellular portion of the chain corresponds to 1 to 12; the sequence is MLELIGRIDYRL. Residues 13 to 33 traverse the membrane as a helical segment; that stretch reads GVGALIVALIIVIIVWTIAYI. Residues 34 to 86 are Cytoplasmic-facing; that stretch reads EYRKLVRQRRIDWLVKRIKERAEDSGNESGGDTEELETMVDMGHLRLLDGNDL. Residues S58 and S62 each carry the phosphoserine; by host CK2 modification.

This sequence belongs to the HIV-1 VPU protein family. Homopentamer. Interacts with host CD4 and BRTC; these interactions induce proteasomal degradation of CD4. Interacts with host BST2; this interaction leads to the degradation of host BST2. Interacts with host FBXW11. Interacts with host AP1M1; this interaction plays a role in the mistrafficking and subsequent degradation of host BST2. Interacts with host RANBP2; this interaction allows Vpu to down-regulate host BLM sumoylation. In terms of processing, phosphorylated by host CK2. This phosphorylation is necessary for interaction with human BTRC and degradation of CD4.

Its subcellular location is the host membrane. Ion channel activity is inhibited by hexamethylene amiloride in vitro. Enhances virion budding, by targeting human CD4 and Tetherin/BST2 to proteasome degradation. Degradation of CD4 prevents any unwanted premature interactions between viral Env and its host receptor CD4 in the endoplasmic reticulum. Degradation of antiretroviral protein Tetherin/BST2 is important for virion budding, as BST2 tethers new viral particles to the host cell membrane. Mechanistically, Vpu bridges either CD4 or BST2 to BTRC, a substrate recognition subunit of the Skp1/Cullin/F-box protein E3 ubiquitin ligase, induces their ubiquitination and subsequent proteasomal degradation. The alteration of the E3 ligase specificity by Vpu seems to promote the degradation of host IKBKB, leading to NF-kappa-B down-regulation and subsequent apoptosis. Acts as a viroporin that forms an oligomeric ion channel in membranes. Modulates the host DNA repair mechanisms to promote degradation of nuclear viral cDNA in cells that are already productively infected in order to suppress immune sensing and proviral hyper-integration (superinfection). Manipulates PML-NBs and modulates SUMOylation of host BLM protein thereby enhancing its DNA-end processing activity toward viral unintegrated linear DNA. Also inhibits RAD52-mediated homologous repair of viral cDNA, preventing the generation of dead-end circular forms of single copies of the long terminal repeat and permitting sustained nucleolytic attack. This Homo sapiens (Human) protein is Protein Vpu.